Reading from the N-terminus, the 436-residue chain is C4-dicarboxylate transport protein 2 (436 aa).

The next 9 membrane-spanning stretches (helical) occupy residues 14 to 34, 45 to 65, 77 to 97, 142 to 162, 198 to 218, 223 to 243, 290 to 310, 331 to 351, and 353 to 373; these read VLVAIAIGIALGHWYPETAVA, LIKMAIAPIIFCTVVTGIAGM, MALLYFEIVSTVALIIGLVVV, VVGAFANGDILQVLFFSVLFG, PIGAFGAMAFTIGAYGVGSLV, LMLCFYITCLLFVLIVLGGIA, VVGLVIPTGYSFNLDGTSIYL, ITLLLVLLIASKGAAGVTGSG, and IVLAATLSAVGHLPVAGLALI. The disordered stretch occupies residues 414–436; it reads ELAGEGNASSPASDIPVGGREAV.

Belongs to the dicarboxylate/amino acid:cation symporter (DAACS) (TC 2.A.23) family.

The protein localises to the cell inner membrane. In terms of biological role, responsible for the transport of dicarboxylates such as succinate, fumarate, and malate from the periplasm across the membrane. This Pseudomonas paraeruginosa (strain DSM 24068 / PA7) (Pseudomonas aeruginosa (strain PA7)) protein is C4-dicarboxylate transport protein 2.